The chain runs to 337 residues: Vacuolar protein sorting-associated protein 26B-B (337 aa).

Residues 313–337 (RFEGTSHPETRPQHSGAAALEQEHE) form a disordered region.

The protein belongs to the VPS26 family. Component of the heterotrimeric retromer cargo-selective complex (CSC) which is believed to associate with variable sorting nexins to form functionally distinct retromer complex variants.

It is found in the cytoplasm. The protein localises to the membrane. Its subcellular location is the endosome. Its function is as follows. Acts as a component of the retromer cargo-selective complex (CSC). The CSC is believed to be the core functional component of retromer or respective retromer complex variants acting to prevent missorting of selected transmembrane cargo proteins into the lysosomal degradation pathway. Retromer mediates retrograde transport of cargo proteins from endosomes to the trans-Golgi network (TGN). This Xenopus laevis (African clawed frog) protein is Vacuolar protein sorting-associated protein 26B-B (vps26b-b).